A 180-amino-acid chain; its full sequence is MAARLKERYDKQLRAELMKELGFANPMQAPRLEKIVVNMGLGEAINNGKIIDASVEQLAAITGQKPVVTRARKSIANFKLRQGQSIGAMVTLRGDRMYEFFDRLVSIALPRVRDFKGVSPKAFDGKGNYTLGVREQIIFPEINYDKVEKIKGLNITVVTTARNDEEGRALLRHLGMPFRQ.

This sequence belongs to the universal ribosomal protein uL5 family. As to quaternary structure, part of the 50S ribosomal subunit; part of the 5S rRNA/L5/L18/L25 subcomplex. Contacts the 5S rRNA and the P site tRNA. Forms a bridge to the 30S subunit in the 70S ribosome.

This is one of the proteins that bind and probably mediate the attachment of the 5S RNA into the large ribosomal subunit, where it forms part of the central protuberance. In the 70S ribosome it contacts protein S13 of the 30S subunit (bridge B1b), connecting the 2 subunits; this bridge is implicated in subunit movement. Contacts the P site tRNA; the 5S rRNA and some of its associated proteins might help stabilize positioning of ribosome-bound tRNAs. The polypeptide is Large ribosomal subunit protein uL5 (Anaeromyxobacter dehalogenans (strain 2CP-1 / ATCC BAA-258)).